A 376-amino-acid chain; its full sequence is Endo-1,4-beta-xylanase A (376 aa).

The signal sequence occupies residues methionine 1–alanine 18. The GH10 domain occupies glutamine 55 to alanine 355. N-linked (GlcNAc...) asparagine glycosylation is present at asparagine 100. Glutamate 170 (proton donor) is an active-site residue. Glutamate 277 (nucleophile) is an active-site residue. Residue asparagine 358 is glycosylated (N-linked (GlcNAc...) asparagine).

This sequence belongs to the glycosyl hydrolase 10 (cellulase F) family.

The protein resides in the secreted. It catalyses the reaction Endohydrolysis of (1-&gt;4)-beta-D-xylosidic linkages in xylans.. Its pathway is glycan degradation; xylan degradation. Partial inhibition of activity is detected in the presence of Ag(+), Cu2(+) and SDS. Like most fungal xylanases, activity is completely inhibited by Hg(2+) since Hg(2+) could interact with tryptophan residues and oxidize the indole ring. Beta-mercaptoethanol enhances the enzymatic activity by counteracting the oxidation effects of the S-S linkage between cysteine residues. In terms of biological role, endo-1,4-beta-xylanase involved in the hydrolysis of xylan, a major structural heterogeneous polysaccharide found in plant biomass representing the second most abundant polysaccharide in the biosphere, after cellulose. Is most active on birchwood xylan (defined as 100%), moderate on beechwood xylan (96.8%) and soluble wheat arabinoxylan (84.5%), and weak on insoluble wheat arabinoxylan (19.7%). Hydrolyzes substrates into a mixture of xylobiose and xylotriose, but no xylose. No activity was detected in the presence of barley beta-glucan, carboxymethyl cellulose-sodium (CMC-Na), and Avicel. Acts as an alkali-tolerant xylanase, exhibiting 68.8% of the activity at pH 9.0, and even 31.8% at pH 10.0. The chain is Endo-1,4-beta-xylanase A from Humicola insolens (Soft-rot fungus).